We begin with the raw amino-acid sequence, 478 residues long: 3-isopropylmalate dehydratase large subunit (478 aa).

[4Fe-4S] cluster is bound by residues cysteine 355, cysteine 415, and cysteine 418.

It belongs to the aconitase/IPM isomerase family. LeuC type 1 subfamily. In terms of assembly, heterodimer of LeuC and LeuD. Requires [4Fe-4S] cluster as cofactor.

It catalyses the reaction (2R,3S)-3-isopropylmalate = (2S)-2-isopropylmalate. The protein operates within amino-acid biosynthesis; L-leucine biosynthesis; L-leucine from 3-methyl-2-oxobutanoate: step 2/4. Catalyzes the isomerization between 2-isopropylmalate and 3-isopropylmalate, via the formation of 2-isopropylmaleate. The chain is 3-isopropylmalate dehydratase large subunit from Paracoccus denitrificans (strain Pd 1222).